A 228-amino-acid chain; its full sequence is Ankyrin repeat domain-containing protein 46 (228 aa).

ANK repeat units lie at residues 11–40 (QTSVPLLQACIDGDLSFARRLLETGCDPNI), 44–73 (RGRTGLHLAAARGNVDICRFLHKFGADLLA), 77–103 (QGNTALHLCGHVDTIQFLVSNGLKIDI), and 107–138 (NGSTPLVLAKRRGVNKDAIRLLEGLEEQEVKG). Residues 195 to 215 (VLLLLVVIALLSLGIAYYVSG) traverse the membrane as a helical segment.

The protein resides in the membrane. The sequence is that of Ankyrin repeat domain-containing protein 46 (ankrd46) from Danio rerio (Zebrafish).